A 305-amino-acid chain; its full sequence is Ribonuclease BN (305 aa).

Zn(2+) is bound by residues H64, H66, D68, H69, H141, D212, and H270. The active-site Proton acceptor is D68.

The protein belongs to the RNase Z family. RNase BN subfamily. Homodimer. Zn(2+) is required as a cofactor.

Its function is as follows. Zinc phosphodiesterase, which has both exoribonuclease and endoribonuclease activities. The polypeptide is Ribonuclease BN (Escherichia coli O6:K15:H31 (strain 536 / UPEC)).